The chain runs to 447 residues: MSESQQYLTVTALTQYLKRKFEVDPYLGKVYLTGEVSNYRPRPNTHQYFSLKDDHAKISAIMFKSAFAKVKFQPEEGMKVLVVGRIGLYEPSGSYQIYVERMEPDGVGALYQAYEQLKKKLAAEGLFSAPKKPLPRFPKRIAVVTSRSGAVIRDIITTTRRRFPIAQIVLFPSQVQGDAAAAEISRQIERANAQGDFDTLIIGRGGGSIEDLWPFNEEVVARAIAQSQLPVISSVGHETDTTIADLVADVRAATPTAAAELAVPVYNDVLLQLKQDQTRVFNAFQNFVQRDRQRLNKLQTSYVFTQPNRLYEGYLQKLDFLNERLKQAGQNNFNLASQHYQRVFQQLRQQTPIHQVRQAQTQLLNLQQRLNRGTQLVVRQKRQQLTQTVQSLDLLSPLKIMTRGYAFVTADEQVVHGVKQLQPEQTVAIHMADGEAQAQITKIDGGK.

The protein belongs to the XseA family. As to quaternary structure, heterooligomer composed of large and small subunits.

It localises to the cytoplasm. The catalysed reaction is Exonucleolytic cleavage in either 5'- to 3'- or 3'- to 5'-direction to yield nucleoside 5'-phosphates.. Its function is as follows. Bidirectionally degrades single-stranded DNA into large acid-insoluble oligonucleotides, which are then degraded further into small acid-soluble oligonucleotides. This is Exodeoxyribonuclease 7 large subunit from Lactiplantibacillus plantarum (strain ATCC BAA-793 / NCIMB 8826 / WCFS1) (Lactobacillus plantarum).